Reading from the N-terminus, the 122-residue chain is Large ribosomal subunit protein uL14 (122 aa).

The protein belongs to the universal ribosomal protein uL14 family. In terms of assembly, part of the 50S ribosomal subunit. Forms a cluster with proteins L3 and L19. In the 70S ribosome, L14 and L19 interact and together make contacts with the 16S rRNA in bridges B5 and B8.

Binds to 23S rRNA. Forms part of two intersubunit bridges in the 70S ribosome. This chain is Large ribosomal subunit protein uL14, found in Pseudomonas paraeruginosa (strain DSM 24068 / PA7) (Pseudomonas aeruginosa (strain PA7)).